The chain runs to 185 residues: Small ribosomal subunit protein uS4c (185 aa).

Residues 72 to 134 (MRLDNVIFRL…PTSCNALKGE (63 aa)) enclose the S4 RNA-binding domain. The disordered stretch occupies residues 132–154 (KGESPGGGETPDHLTASLSEGSR).

It belongs to the universal ribosomal protein uS4 family. As to quaternary structure, part of the 30S ribosomal subunit. Contacts protein S5. The interaction surface between S4 and S5 is involved in control of translational fidelity.

The protein localises to the plastid. The protein resides in the chloroplast. Functionally, one of the primary rRNA binding proteins, it binds directly to 16S rRNA where it nucleates assembly of the body of the 30S subunit. Its function is as follows. With S5 and S12 plays an important role in translational accuracy. This chain is Small ribosomal subunit protein uS4c (rps4), found in Woodwardia unigemmata (Chainfern).